Reading from the N-terminus, the 357-residue chain is Dynein axonemal assembly factor 10 (357 aa).

6 WD repeats span residues 63–105 (EKAK…MPVY), 115–154 (NAID…DPVA), 162–205 (ENKR…LRWE), 207–249 (NIKN…PTKG), 257–297 (AHKS…QRSK), and 319–357 (LSTQ…LNKI).

Component of the PAQosome complex which is responsible for the biogenesis of several protein complexes and which consists of R2TP complex members RUVBL1, RUVBL2, RPAP3 and PIH1D1, URI complex members PFDN2, PFDN6, PDRG1, UXT and URI1 as well as ASDURF, POLR2E and DNAAF10/WDR92. Interacts with PIH1D1; the interaction associates DNAAF10 with the R2TP complex. Interacts with several dynein axonemal assembly factors. In terms of tissue distribution, widely expressed with the highest expression in testis.

It is found in the dynein axonemal particle. In terms of biological role, key assembly factor specifically required for the stability of axonemal dynein heavy chains in cytoplasm. This Homo sapiens (Human) protein is Dynein axonemal assembly factor 10.